An 874-amino-acid chain; its full sequence is Alanine--tRNA ligase (874 aa).

The Zn(2+) site is built by H562, H566, C664, and H668.

The protein belongs to the class-II aminoacyl-tRNA synthetase family. Requires Zn(2+) as cofactor.

The protein resides in the cytoplasm. The enzyme catalyses tRNA(Ala) + L-alanine + ATP = L-alanyl-tRNA(Ala) + AMP + diphosphate. In terms of biological role, catalyzes the attachment of alanine to tRNA(Ala) in a two-step reaction: alanine is first activated by ATP to form Ala-AMP and then transferred to the acceptor end of tRNA(Ala). Also edits incorrectly charged Ser-tRNA(Ala) and Gly-tRNA(Ala) via its editing domain. The sequence is that of Alanine--tRNA ligase from Shewanella halifaxensis (strain HAW-EB4).